We begin with the raw amino-acid sequence, 506 residues long: Ribose import ATP-binding protein RbsA (506 aa).

2 ABC transporter domains span residues 5-237 (VQLI…VGRP) and 249-492 (PFGA…LAIE). 37–44 (GENGAGKS) contributes to the ATP binding site.

This sequence belongs to the ABC transporter superfamily. Ribose importer (TC 3.A.1.2.1) family. As to quaternary structure, the complex is composed of an ATP-binding protein (RbsA), two transmembrane proteins (RbsC) and a solute-binding protein (RbsB).

It localises to the cell inner membrane. The enzyme catalyses D-ribose(out) + ATP + H2O = D-ribose(in) + ADP + phosphate + H(+). Functionally, part of the ABC transporter complex RbsABC involved in ribose import. Responsible for energy coupling to the transport system. In Chelativorans sp. (strain BNC1), this protein is Ribose import ATP-binding protein RbsA.